The primary structure comprises 217 residues: Large ribosomal subunit protein bL21m (217 aa).

Residues 61–81 (PPKVTTATTPEAPAAVPTSTP) are compositionally biased toward low complexity. Residues 61–87 (PPKVTTATTPEAPAAVPTSTPFSQQPP) form a disordered region.

Belongs to the bacterial ribosomal protein bL21 family. In terms of assembly, component of the mitochondrial large ribosomal subunit (mt-LSU). Mature N.crassa 74S mitochondrial ribosomes consist of a small (37S) and a large (54S) subunit. The 37S small subunit contains a 16S ribosomal RNA (16S mt-rRNA) and 32 different proteins. The 54S large subunit contains a 23S rRNA (23S mt-rRNA) and 42 different proteins.

It localises to the mitochondrion. Functionally, component of the mitochondrial ribosome (mitoribosome), a dedicated translation machinery responsible for the synthesis of mitochondrial genome-encoded proteins, including at least some of the essential transmembrane subunits of the mitochondrial respiratory chain. The mitoribosomes are attached to the mitochondrial inner membrane and translation products are cotranslationally integrated into the membrane. The chain is Large ribosomal subunit protein bL21m (mrpl49) from Neurospora crassa (strain ATCC 24698 / 74-OR23-1A / CBS 708.71 / DSM 1257 / FGSC 987).